A 135-amino-acid chain; its full sequence is UPF0102 protein Mjls_1965 (135 aa).

Belongs to the UPF0102 family.

The polypeptide is UPF0102 protein Mjls_1965 (Mycobacterium sp. (strain JLS)).